Here is a 415-residue protein sequence, read N- to C-terminus: MFERNRYTIDQIDPEVFAAIQQENQRQEDHIELIASENYTSPAVMAAQGSQLTNKYAEGYPGKRYYGGCEYVDVVEQLAIDRVKQLFGAEAANVQPNSGSQANQGVFFAMLKPGDTIMGMSLAEGGHLTHGMALNMSGKWFNVVSYGLNAQEDIDYDALEALAQEKKPKLIIAGASAFALRIDFERIAKVAKAVGAYFMVDMAHYAGLIAAGVYPNPVPHADFVTTTTHKSLRGPRGGVILMKAEHEKAINSAIFPGIQGGPLMHVIAGKAVAFKEAQSPTFKAYQEQVVKNARAMAETLMARGLRIVSGRTESHVMLVDLRAKSITGKEAEKVLGDAHITVNKNAIPNDPEKPFVTSGIRLGSPAMTTRGFKEGEAVKVAHLIADVLDNPHDEANIAAVRAKVAELTKQFPVYA.

(6S)-5,6,7,8-tetrahydrofolate contacts are provided by residues L122 and 126-128; that span reads GHL. An N6-(pyridoxal phosphate)lysine modification is found at K230.

The protein belongs to the SHMT family. Homodimer. Pyridoxal 5'-phosphate serves as cofactor.

Its subcellular location is the cytoplasm. The catalysed reaction is (6R)-5,10-methylene-5,6,7,8-tetrahydrofolate + glycine + H2O = (6S)-5,6,7,8-tetrahydrofolate + L-serine. It participates in one-carbon metabolism; tetrahydrofolate interconversion. Its pathway is amino-acid biosynthesis; glycine biosynthesis; glycine from L-serine: step 1/1. In terms of biological role, catalyzes the reversible interconversion of serine and glycine with tetrahydrofolate (THF) serving as the one-carbon carrier. This reaction serves as the major source of one-carbon groups required for the biosynthesis of purines, thymidylate, methionine, and other important biomolecules. Also exhibits THF-independent aldolase activity toward beta-hydroxyamino acids, producing glycine and aldehydes, via a retro-aldol mechanism. The chain is Serine hydroxymethyltransferase 1 from Ralstonia nicotianae (strain ATCC BAA-1114 / GMI1000) (Ralstonia solanacearum).